The chain runs to 102 residues: RNA-binding protein Hfq (102 aa).

The 60-residue stretch at 9–68 (DPFLNALRRERVPVSIYLVNGIKLQGQIESFDQFVILLKNTVSQMVYKHAISTVVPSRPV) folds into the Sm domain. Positions 63–102 (VPSRPVSHHSNNAGGGTSSNYHHGSSAQGTSAQQDSEETE) are disordered. Positions 70–96 (HHSNNAGGGTSSNYHHGSSAQGTSAQQ) are enriched in polar residues.

It belongs to the Hfq family. Homohexamer.

Functionally, RNA chaperone that binds small regulatory RNA (sRNAs) and mRNAs to facilitate mRNA translational regulation in response to envelope stress, environmental stress and changes in metabolite concentrations. Also binds with high specificity to tRNAs. The polypeptide is RNA-binding protein Hfq (Citrobacter koseri (strain ATCC BAA-895 / CDC 4225-83 / SGSC4696)).